The primary structure comprises 41 residues: KYYGNGVHXGKHSXTVDWGTAIGNIGNNAAANXATGXNAGG.

Belongs to the bacteriocin class IIA/YGNGV family.

The protein localises to the secreted. Its function is as follows. This heat stable bacteriocin shows activity against species of Lactobacillus, Listeria monocytogenes, Pediococcus, Enterococcus, Leuconostoc and Lactococcus. The sequence is that of Bacteriocin bavaricin-A from Latilactobacillus sakei (Lactobacillus sakei).